A 367-amino-acid polypeptide reads, in one-letter code: tRNA-specific 2-thiouridylase MnmA (367 aa).

ATP-binding positions include 24–31 (AMSGGVDS) and Leu-50. Cys-115 acts as the Nucleophile in catalysis. Cys-115 and Cys-211 are oxidised to a cystine. Residue Gly-139 coordinates ATP. The tract at residues 161 to 163 (KDQ) is interaction with tRNA. The active-site Cysteine persulfide intermediate is the Cys-211.

The protein belongs to the MnmA/TRMU family.

The protein localises to the cytoplasm. It carries out the reaction S-sulfanyl-L-cysteinyl-[protein] + uridine(34) in tRNA + AH2 + ATP = 2-thiouridine(34) in tRNA + L-cysteinyl-[protein] + A + AMP + diphosphate + H(+). In terms of biological role, catalyzes the 2-thiolation of uridine at the wobble position (U34) of tRNA, leading to the formation of s(2)U34. The sequence is that of tRNA-specific 2-thiouridylase MnmA from Ehrlichia canis (strain Jake).